A 397-amino-acid polypeptide reads, in one-letter code: Chorismate synthase (397 aa).

2 residues coordinate NADP(+): Arg-40 and Arg-46. FMN is bound by residues 129-131 (RSS), 257-258 (QA), Gly-302, 317-321 (KPISS), and Arg-343.

Belongs to the chorismate synthase family. In terms of assembly, homotetramer. The cofactor is FMNH2.

It catalyses the reaction 5-O-(1-carboxyvinyl)-3-phosphoshikimate = chorismate + phosphate. It functions in the pathway metabolic intermediate biosynthesis; chorismate biosynthesis; chorismate from D-erythrose 4-phosphate and phosphoenolpyruvate: step 7/7. Its function is as follows. Catalyzes the anti-1,4-elimination of the C-3 phosphate and the C-6 proR hydrogen from 5-enolpyruvylshikimate-3-phosphate (EPSP) to yield chorismate, which is the branch point compound that serves as the starting substrate for the three terminal pathways of aromatic amino acid biosynthesis. This reaction introduces a second double bond into the aromatic ring system. This is Chorismate synthase from Chlorobium luteolum (strain DSM 273 / BCRC 81028 / 2530) (Pelodictyon luteolum).